The following is a 291-amino-acid chain: Ribosomal RNA small subunit methyltransferase A (291 aa).

S-adenosyl-L-methionine-binding residues include N27, L29, G54, E75, D100, and N125.

It belongs to the class I-like SAM-binding methyltransferase superfamily. rRNA adenine N(6)-methyltransferase family. RsmA subfamily.

Its subcellular location is the cytoplasm. It carries out the reaction adenosine(1518)/adenosine(1519) in 16S rRNA + 4 S-adenosyl-L-methionine = N(6)-dimethyladenosine(1518)/N(6)-dimethyladenosine(1519) in 16S rRNA + 4 S-adenosyl-L-homocysteine + 4 H(+). Its function is as follows. Specifically dimethylates two adjacent adenosines (A1518 and A1519) in the loop of a conserved hairpin near the 3'-end of 16S rRNA in the 30S particle. May play a critical role in biogenesis of 30S subunits. The chain is Ribosomal RNA small subunit methyltransferase A from Streptococcus mutans serotype c (strain ATCC 700610 / UA159).